Consider the following 156-residue polypeptide: 6,7-dimethyl-8-ribityllumazine synthase (156 aa).

Residues Phe22, 57 to 59 (AYE), and 81 to 83 (TVI) each bind 5-amino-6-(D-ribitylamino)uracil. 86–87 (GT) is a (2S)-2-hydroxy-3-oxobutyl phosphate binding site. His89 functions as the Proton donor in the catalytic mechanism. Phe114 is a binding site for 5-amino-6-(D-ribitylamino)uracil. Residue Arg128 coordinates (2S)-2-hydroxy-3-oxobutyl phosphate.

Belongs to the DMRL synthase family. As to quaternary structure, forms an icosahedral capsid composed of 60 subunits, arranged as a dodecamer of pentamers.

The enzyme catalyses (2S)-2-hydroxy-3-oxobutyl phosphate + 5-amino-6-(D-ribitylamino)uracil = 6,7-dimethyl-8-(1-D-ribityl)lumazine + phosphate + 2 H2O + H(+). Its pathway is cofactor biosynthesis; riboflavin biosynthesis; riboflavin from 2-hydroxy-3-oxobutyl phosphate and 5-amino-6-(D-ribitylamino)uracil: step 1/2. Functionally, catalyzes the formation of 6,7-dimethyl-8-ribityllumazine by condensation of 5-amino-6-(D-ribitylamino)uracil with 3,4-dihydroxy-2-butanone 4-phosphate. This is the penultimate step in the biosynthesis of riboflavin. The sequence is that of 6,7-dimethyl-8-ribityllumazine synthase from Serratia proteamaculans (strain 568).